Here is a 385-residue protein sequence, read N- to C-terminus: 4-hydroxy-3-methylbut-2-en-1-yl diphosphate synthase (flavodoxin) (385 aa).

Residues Cys-280, Cys-283, Cys-315, and Glu-322 each coordinate [4Fe-4S] cluster.

Belongs to the IspG family. It depends on [4Fe-4S] cluster as a cofactor.

The enzyme catalyses (2E)-4-hydroxy-3-methylbut-2-enyl diphosphate + oxidized [flavodoxin] + H2O + 2 H(+) = 2-C-methyl-D-erythritol 2,4-cyclic diphosphate + reduced [flavodoxin]. The protein operates within isoprenoid biosynthesis; isopentenyl diphosphate biosynthesis via DXP pathway; isopentenyl diphosphate from 1-deoxy-D-xylulose 5-phosphate: step 5/6. Its function is as follows. Converts 2C-methyl-D-erythritol 2,4-cyclodiphosphate (ME-2,4cPP) into 1-hydroxy-2-methyl-2-(E)-butenyl 4-diphosphate. The chain is 4-hydroxy-3-methylbut-2-en-1-yl diphosphate synthase (flavodoxin) from Streptomyces griseus subsp. griseus (strain JCM 4626 / CBS 651.72 / NBRC 13350 / KCC S-0626 / ISP 5235).